Reading from the N-terminus, the 213-residue chain is TVP38/TMEM64 family membrane protein YtxB (213 aa).

6 consecutive transmembrane segments (helical) span residues 9-29 (WLAV…YLNV), 34-54 (IRVW…GISI), 58-78 (LVLF…GPLL), 81-101 (LYTL…AGLF), 159-179 (AVGI…FLAG), and 181-201 (LPAF…PFIF).

Belongs to the TVP38/TMEM64 family.

Its subcellular location is the cell membrane. In Bacillus subtilis (strain 168), this protein is TVP38/TMEM64 family membrane protein YtxB (ytxB).